The chain runs to 147 residues: Lysozyme C (147 aa).

The N-terminal stretch at 1-18 (MRSLLILVLCFLPLAALG) is a signal peptide. One can recognise a C-type lysozyme domain in the interval 19–147 (KVFGRCELAA…VQAWIRGCRL (129 aa)). Intrachain disulfides connect Cys24-Cys145, Cys48-Cys133, Cys82-Cys98, and Cys94-Cys112. Catalysis depends on residues Glu53 and Asp70. Asp119 provides a ligand contact to substrate.

It belongs to the glycosyl hydrolase 22 family. In terms of assembly, monomer. In terms of tissue distribution, in the egg white and polymorphonuclear leukocytes.

It localises to the secreted. The catalysed reaction is Hydrolysis of (1-&gt;4)-beta-linkages between N-acetylmuramic acid and N-acetyl-D-glucosamine residues in a peptidoglycan and between N-acetyl-D-glucosamine residues in chitodextrins.. Its function is as follows. Lysozymes have primarily a bacteriolytic function; those in tissues and body fluids are associated with the monocyte-macrophage system and enhance the activity of immunoagents. Has bacteriolytic activity against M.luteus. This Gallus gallus (Chicken) protein is Lysozyme C (LYZ).